Reading from the N-terminus, the 359-residue chain is Histidinol-phosphate aminotransferase (359 aa).

Lys-212 is modified (N6-(pyridoxal phosphate)lysine).

Belongs to the class-II pyridoxal-phosphate-dependent aminotransferase family. Histidinol-phosphate aminotransferase subfamily. In terms of assembly, homodimer. Pyridoxal 5'-phosphate is required as a cofactor.

It carries out the reaction L-histidinol phosphate + 2-oxoglutarate = 3-(imidazol-4-yl)-2-oxopropyl phosphate + L-glutamate. It functions in the pathway amino-acid biosynthesis; L-histidine biosynthesis; L-histidine from 5-phospho-alpha-D-ribose 1-diphosphate: step 7/9. The polypeptide is Histidinol-phosphate aminotransferase (Buchnera aphidicola subsp. Melaphis rhois).